Consider the following 415-residue polypeptide: MVSTRGVLYYLLRPKELRPILQWKALHGLGHQRDEKNESPDVKACYQYLALTSRSFAAVCQQLDRELLMPICIFYLILRGLDTIEDDMTLSKEVKEPLLRNFYTTIYDQTWTFNDSGTDEKDRELLVHFDCVAREFHKIKDEYKIIITDITKQMGNGMADFVVSGDLTGIQKIKDYELYCHYVAGVVGDGLTRLFVEANVADPSLLKNPRLIESMGQFLQQTNIIRDVREDHDEVRHFWPKEVWSKYAQDFDHLVSPKPQDRKKALQCSSEMVLMALNRADDCLNYMAGVREQTVFNFVAIPQSMAIATLELCFQNPAIFDKNIKITKGATCQLMIDSTQDLQHVCQAFRRYARRIKKKNHPEDPHFHDINAACNKIDRFIDDRYPNLQDEQAKADTMYLAVLVLGVFGVVAAIL.

Asn114 carries N-linked (GlcNAc...) asparagine glycosylation. Residues 395-415 (ADTMYLAVLVLGVFGVVAAIL) traverse the membrane as a helical segment.

It belongs to the phytoene/squalene synthase family. Requires Mg(2+) as cofactor.

It localises to the membrane. It catalyses the reaction 2 (2E,6E)-farnesyl diphosphate + NADH + H(+) = squalene + 2 diphosphate + NAD(+). It carries out the reaction 2 (2E,6E)-farnesyl diphosphate + NADPH + H(+) = squalene + 2 diphosphate + NADP(+). Its pathway is terpene metabolism; lanosterol biosynthesis; lanosterol from farnesyl diphosphate: step 1/3. Its function is as follows. Squalene synthase; part of the gene cluster that mediates the biosynthesis of squalestatin S1 (SQS1, also known as zaragozic acid A), a heavily oxidized fungal polyketide that offers potent cholesterol lowering activity by targeting squalene synthase (SS). Catalyzes the condensation of 2 two farnesyl pyrophosphate moieties to form squalene. The presence of a gene encoding a squalene synthase supports the identification of the cluster as being responsible for SQS1 production and suggests a likely mechanism for self-resistance. The sequence is that of Squalene synthase clz20 from Cochliobolus lunatus (Filamentous fungus).